An 84-amino-acid chain; its full sequence is U4-theraphotoxin-Hhn1n (84 aa).

An N-terminal signal peptide occupies residues 1–22; the sequence is MKVTLIAILTCAAVLVLHTTAA. Residues 23–47 constitute a propeptide that is removed on maturation; that stretch reads EELEESQLMEVGMPDTELAAVDEER. Disulfide bonds link Cys51–Cys65, Cys55–Cys76, and Cys70–Cys81.

It belongs to the neurotoxin 12 (Hwtx-2) family. 02 (Hwtx-2) subfamily. Expressed by the venom gland.

The protein resides in the secreted. Its function is as follows. Postsynaptic neurotoxin. The sequence is that of U4-theraphotoxin-Hhn1n from Cyriopagopus hainanus (Chinese bird spider).